A 201-amino-acid polypeptide reads, in one-letter code: Guanylate kinase (201 aa).

The Guanylate kinase-like domain maps to 2 to 180; it reads SCLFVISAPS…AARDVASIVQ (179 aa). 9 to 16 is a binding site for ATP; that stretch reads APSGAGKT.

It belongs to the guanylate kinase family.

It is found in the cytoplasm. The enzyme catalyses GMP + ATP = GDP + ADP. In terms of biological role, essential for recycling GMP and indirectly, cGMP. In Nitrosomonas europaea (strain ATCC 19718 / CIP 103999 / KCTC 2705 / NBRC 14298), this protein is Guanylate kinase.